A 978-amino-acid polypeptide reads, in one-letter code: Monofunctional C1-tetrahydrofolate synthase, mitochondrial (978 aa).

The span at 1-10 (MGTRLPLVLR) shows a compositional bias: low complexity. A mitochondrion-targeting transit peptide spans 1-31 (MGTRLPLVLRQLRRPPQPPGPPRRLRVPCRA). Residues 1–71 (MGTRLPLVLR…SPGGRTPAAR (71 aa)) are disordered. The methylenetetrahydrofolate dehydrogenase and cyclohydrolase stretch occupies residues 31 to 348 (ASSGGGGGGG…REQQHRRWRL (318 aa)). The span at 33-45 (SGGGGGGGGGREG) shows a compositional bias: gly residues. Lys-189 bears the N6-acetyllysine; alternate mark. Lys-189 bears the N6-succinyllysine; alternate mark. The formyltetrahydrofolate synthetase stretch occupies residues 349-978 (HCLKLQPLSP…TETEQVKGLF (630 aa)). At Ser-357 the chain carries Phosphoserine. ATP is bound at residue 423-430 (TPLGEGKS). Lys-596 is subject to N6-succinyllysine.

This sequence in the N-terminal section; belongs to the tetrahydrofolate dehydrogenase/cyclohydrolase family. The protein in the C-terminal section; belongs to the formate--tetrahydrofolate ligase family. Homodimer. Detected in most tissues, highest expression found in placenta, thymus and brain. Low expression is found in liver and skeletal muscle. Up-regulated in colon adenocarcinoma.

Its subcellular location is the mitochondrion. The enzyme catalyses (6S)-5,6,7,8-tetrahydrofolate + formate + ATP = (6R)-10-formyltetrahydrofolate + ADP + phosphate. Its pathway is one-carbon metabolism; tetrahydrofolate interconversion. May provide the missing metabolic reaction required to link the mitochondria and the cytoplasm in the mammalian model of one-carbon folate metabolism complementing thus the enzymatic activities of MTHFD2. This chain is Monofunctional C1-tetrahydrofolate synthase, mitochondrial, found in Homo sapiens (Human).